A 489-amino-acid chain; its full sequence is Homoserine O-acetyltransferase (489 aa).

The AB hydrolase-1 domain maps to 47–354 (NAILVCHALT…NYGHDSFLLE (308 aa)). Catalysis depends on S152, which acts as the Nucleophile. A substrate-binding site is contributed by R221. Catalysis depends on residues D315 and H348. Residue D349 participates in substrate binding. CBS domains follow at residues 375–434 (MIED…NLEE) and 436–489 (MTKN…IEEF).

It belongs to the AB hydrolase superfamily. MetX family. In terms of assembly, homodimer.

Its subcellular location is the cytoplasm. The catalysed reaction is L-homoserine + acetyl-CoA = O-acetyl-L-homoserine + CoA. It functions in the pathway amino-acid biosynthesis; L-methionine biosynthesis via de novo pathway; O-acetyl-L-homoserine from L-homoserine: step 1/1. In terms of biological role, transfers an acetyl group from acetyl-CoA to L-homoserine, forming acetyl-L-homoserine. The chain is Homoserine O-acetyltransferase from Methanohalobium evestigatum (strain ATCC BAA-1072 / DSM 3721 / NBRC 107634 / OCM 161 / Z-7303).